The chain runs to 84 residues: Mu-conotoxin-like Cal 12.2a (84 aa).

The signal sequence occupies residues methionine 1–leucine 19. Residues isoleucine 20–arginine 42 constitute a propeptide that is removed on maturation. 4 disulfides stabilise this stretch: cysteine 45–cysteine 57, cysteine 52–cysteine 65, cysteine 59–cysteine 70, and cysteine 64–cysteine 76. Residue proline 48 is modified to 4-hydroxyproline. Tryptophan 72 carries the post-translational modification 6'-bromotryptophan. A 4-hydroxyproline modification is found at proline 77. Tryptophan 81 carries the post-translational modification 6'-bromotryptophan.

This sequence belongs to the conotoxin O1 superfamily. Expressed by the venom duct.

It is found in the secreted. Functionally, mu-conotoxins block voltage-gated sodium channels. This toxin reversibly blocks voltage-gated sodium channel in cephalopods, with no alteration in the voltage dependence of sodium conductance or on the kinetics of inactivation. This chain is Mu-conotoxin-like Cal 12.2a, found in Californiconus californicus (California cone).